A 379-amino-acid chain; its full sequence is Stimulator of interferon genes protein (379 aa).

Residues 1–17 (MPHSSLHPSIPCPRGHG) lie on the Cytoplasmic side of the membrane. The segment at 1–190 (MPHSSLHPSI…TYNQHYNNLL (190 aa)) is mediates interaction with ZDHHC1 and ZDHHC11. Residues 18 to 34 (AQKAALVLLSACLVTLW) form a helical membrane-spanning segment. Residue Lys-20 forms a Glycyl lysine isopeptide (Lys-Gly) (interchain with G-Cter in ubiquitin) linkage. Residues 35 to 44 (GLGEPPEHTL) lie on the Lumenal side of the membrane. The helical transmembrane segment at 45 to 69 (RYLVLHLASLQLGLLLNGVCSLAEE) threads the bilayer. At 70–91 (LRHIHSRYRGSYWRTVRACLGC) the chain is on the cytoplasmic side. S-palmitoyl cysteine attachment occurs at residues Cys-88 and Cys-91. The chain crosses the membrane as a helical span at residues 92 to 106 (PLRRGALLLLSIYFY). Topologically, residues 107-116 (YSLPNAVGPP) are lumenal. The chain crosses the membrane as a helical span at residues 117–134 (FTWMLALLGLSQALNILL). The Cytoplasmic segment spans residues 135–379 (GLKGLAPAEI…KPLPLRTDFS (245 aa)). A Glycyl lysine isopeptide (Lys-Gly) (interchain with G-Cter in ubiquitin) cross-link involves residue Lys-150. The segment at 153 to 340 (FNVAHGLAWS…RHLRQEEKEE (188 aa)) is cyclic dinucleotide-binding domain (CBD). Residues Ser-162 and Tyr-167 each contribute to the 2',3'-cGAMP site. 3',3'-c-di-GMP is bound by residues Ser-162 and Tyr-167. 2',3'-cUAMP is bound at residue Tyr-167. At Thr-229 the chain carries Phosphothreonine. Residue Lys-236 forms a Glycyl lysine isopeptide (Lys-Gly) (interchain with G-Cter in ubiquitin) linkage. Residue Arg-238 coordinates 2',3'-cGAMP. Arg-238 contacts 2',3'-cUAMP. Residues 238–241 (RVYS) and Thr-263 each bind 3',3'-c-di-GMP. Ser-241 bears the Phosphoserine mark. Thr-263 is a 2',3'-cGAMP binding site. Residue Thr-263 participates in 2',3'-cUAMP binding. Lys-338 participates in a covalent cross-link: Glycyl lysine isopeptide (Lys-Gly) (interchain with G-Cter in SUMO). The C-terminal tail (CTT) stretch occupies residues 340–379 (EVTVGSLKTSAVPSTSTMSQEPELLISGMEKPLPLRTDFS). The tract at residues 341–370 (VTVGSLKTSAVPSTSTMSQEPELLISGMEK) is disordered. Over residues 345 to 359 (SLKTSAVPSTSTMSQ) the composition is skewed to polar residues. At Thr-354 the chain carries Phosphothreonine. At Ser-355 the chain carries Phosphoserine; by MAP3K7. Residue Thr-356 is modified to Phosphothreonine. Residues Ser-358 and Ser-366 each carry the phosphoserine; by TBK1 modification. Positions 363–366 (LLIS) match the pLxIS motif motif.

Belongs to the STING family. In terms of assembly, homodimer; forms a homodimer in absence of cyclic nucleotide (c-di-GMP or cGAMP); 'Lys-63'-linked ubiquitination at Lys-150 is required for homodimerization. Homotetramer; in presence of cyclic nucleotide (c-di-GMP or cGAMP), forms tetramers and higher-order oligomers through side-by-side packing. Interacts (when phosphorylated) with IRF3; following activation and phosphorylation on the pLxIS motif by TBK1, recruits IRF3. Interacts with RIGI, MAVS and SSR2. Interacts with RNF5 and TRIM56. Interacts with TBK1; when homodimer, leading to subsequent production of IFN-beta. Interacts with IFIT1 and IFIT2. Interacts with TRIM29; this interaction induces STING1 ubiquitination and subsequent degradation. Associates with the MHC-II complex. Interacts with STEEP1; interaction takes place upon cGAMP-activation and STING1 phosphorylation by MAP3K7/TAK1 and promotes STING1 translocation to COPII vesicles. Interacts with SEC24A, SEC24B, and SEC24C; promoting translocation to COPII vesicles. Interacts (when ubiquitinated) with SQSTM1; leading to relocalization to autophagosomes. Interacts with SURF4. Interacts with HNRNPA2B1. Interacts with ZDHHC1; ZDHHC1 constitutively interacts with STING1 and in presence of DNA viruses activates it by promoting its cGAMP-induced oligomerization and the recruitment of downstream signaling components. Interacts with ZDHHC11; in presence of DNA viruses promotes the recruitment of IRF3 to STING1. Interacts with TOMM70. Interacts with isoform IFI16-beta of IFI16. Interacts with TAB1; promoting recruitment of TAB1 to the endoplasmic reticulum membrane and subsequent activation of MAP3K7/TAK1. Interacts (via transmembrane domain) with TMEM203. Interacts with DDX41. Interacts with TMEM120A (via C-terminal domain); regulates the trafficking of STING1 from the ER to the ER-Golgi intermediate compartment to elicit antiviral effects. As to quaternary structure, (Microbial infection) Interacts with human papillomavirus (HPV) protein E7. (Microbial infection) Interacts with adenovirus early E1A protein. In terms of assembly, (Microbial infection) Interacts with herpes simplex virus 1 protein ICP34.5; this interaction inhibits the intracellular DNA sensing pathway. As to quaternary structure, (Microbial infection) Interacts with Chikungunya virus non-structural protein 1; this interaction results in inhibition of cGAS-STING signaling and increased levels of palmitoylated nsP1 and protein stabilization. (Microbial infection) Interacts with human cytomegalovirus proteins UL94, UL42 and UL138; these interactions result in the inhibition of cGAS-STING signaling. In terms of assembly, (Microbial infection) Interacts with varivella virus protein 39; this interaction results in the inhibition of cGAS-STING signaling. Phosphorylation by TBK1 leads to activation and production of IFN-beta. Following cyclic nucleotide (c-di-GMP or cGAMP)-binding, activation and translocation from the endoplasmic reticulum, STING1 is phosphorylated by TBK1 at Ser-366 in the pLxIS motif. The phosphorylated pLxIS motif constitutes an IRF3-binding motif, leading to recruitment of the transcription factor IRF3 to induce type-I interferons and other cytokines. The phosphorylated pLxIS motif facilitates SENP2 recruitment during late phase of viral infection. Phosphorylated on tyrosine residues upon MHC-II aggregation. Dephosphorylation by PPP6C leads to inactivation and decreased production of IFN-beta. Phosphorylation at Ser-358 is also required to activate IRF3. Phosphorylation at Ser-355 by MAP3K7/TAK1 facilitates its interaction with STEEP1, promoting STING1 translocation to COPII vesicles. Post-translationally, ubiquitinated. Ubiquitinated via 'Lys-63'-linked ubiquitin chains in response to double-stranded DNA treatment, leading to relocalization to autophagosomes and subsequent degradation; this process is dependent on SQSTM1. 'Lys-63'-linked ubiquitination mediated by TRIM56 at Lys-150 promotes homodimerization and recruitment of the antiviral kinase TBK1 and subsequent production of IFN-beta. 'Lys-48'-linked polyubiquitination at Lys-150 occurring after viral infection is mediated by RNF5 and leads to proteasomal degradation. 'Lys-11'-linked polyubiquitination at Lys-150 by RNF26 leads to stabilize STING1: it protects STING1 from RNF5-mediated 'Lys-48'-linked polyubiquitination. 'Lys-33'-linked and 'Lys-48'-linked deubiquitinated by USP20; leading to its stabilization and promotion of innate antiviral response. 'Lys-48'-linked deubiquitinated by USP44; leading to its stabilization and promotion of innate antiviral response. Deubiquitinated by USP13; leading to inhibition of innate antiviral response. 'Lys-63'-linked deubiquitinated by USP49; leading to inhibition of the subsequent recruitment of TBK1 to the signaling complex. 'Lys-63'-linked ubiquitination mediated by RNF39 promotes the activation of the cGAS-STING pathway. MARCHF5-mediated ubiquitination prevents the oxidation-induced polymer formation. In terms of processing, (Microbial infection) Deubiquitinated by Epstein-Barr virus BPLF1 on both 'Lys-48' and 'Lys-63'-linked ubiquitin chains; leading to inhibition of cGAS-STING signaling. Sumoylated at Lys-338 by TRIM38 during the early phase of viral infection, promoting its stability by preventing its relocalization to autophagosomes and subsequent degradation. Desumoylated by SENP2 during the late phase of viral infection. Post-translationally, palmitoylation takes place in the Golgi apparatus and creates a platform for the recruitment of TBK1. As to expression, ubiquitously expressed. Expressed in skin endothelial cells, alveolar type 2 pneumocytes, bronchial epithelium and alveolar macrophages.

It localises to the endoplasmic reticulum membrane. The protein resides in the cytoplasm. The protein localises to the perinuclear region. It is found in the endoplasmic reticulum-Golgi intermediate compartment membrane. Its subcellular location is the golgi apparatus membrane. It localises to the cytoplasmic vesicle. The protein resides in the autophagosome membrane. The protein localises to the mitochondrion outer membrane. It is found in the cell membrane. It catalyses the reaction H(+)(in) = H(+)(out). With respect to regulation, activated upon binding to the hydrolysis-resistant 2'3'-cG(s)A(s)MP, an analog of cGAMP, in which phosphodiester linkages are replaced by phosphothioate linkages. Specifically inhibited by small-molecule H-151 (N-(4-ethylphenyl)-N'-1H-indol-3-yl-urea), which covalently binds Cys-91 and prevents palmitoylation and subsequent activation of STING1. In contrast to mouse protein, not activated by anticancer molecule 5,6-dimethylxanthenone 4-acetic acid (DMXAA). Inhibited by compound 18 ([(3S,4S)-2-(4-tert-butyl-3-chlorophenyl)-3-(2,3-dihydro-1,4-benzodioxin-6-yl)-7-fluoro-1-oxo-1,2,3,4-tetrahydroisoquinolin-4-yl]acetate), a competitive inhibitor with slow dissociation kinetics and good oral bioavailability. Homooligomerization and ability to promote the production of type I interferons is activated by C53, a small benzothiazinone-like compound that binds to the transmembrane regions. in the area of the putative pore. In contrast, compound C53, directly inhibits the proton channel activity and facilitate MAP1LC3B/LC3B lipidation and autophagosome formation. Functionally, facilitator of innate immune signaling that acts as a sensor of cytosolic DNA from bacteria and viruses and promotes the production of type I interferon (IFN-alpha and IFN-beta). Innate immune response is triggered in response to non-CpG double-stranded DNA from viruses and bacteria delivered to the cytoplasm. Acts by binding cyclic dinucleotides: recognizes and binds cyclic di-GMP (c-di-GMP), a second messenger produced by bacteria, cyclic UMP-AMP (2',3'-cUAMP), and cyclic GMP-AMP (cGAMP), a messenger produced by CGAS in response to DNA virus in the cytosol. Upon binding to c-di-GMP, cUAMP or cGAMP, STING1 oligomerizes, translocates from the endoplasmic reticulum and is phosphorylated by TBK1 on the pLxIS motif, leading to recruitment and subsequent activation of the transcription factor IRF3 to induce expression of type I interferon and exert a potent anti-viral state. Exhibits 2',3' phosphodiester linkage-specific ligand recognition: can bind both 2'-3' linked cGAMP (2'-3'-cGAMP) and 3'-3' linked cGAMP but is preferentially activated by 2'-3' linked cGAMP. The preference for 2'-3'-cGAMP, compared to other linkage isomers is probably due to the ligand itself, whichs adopts an organized free-ligand conformation that resembles the STING1-bound conformation and pays low energy costs in changing into the active conformation. In addition to promote the production of type I interferons, plays a direct role in autophagy. Following cGAMP-binding, STING1 buds from the endoplasmic reticulum into COPII vesicles, which then form the endoplasmic reticulum-Golgi intermediate compartment (ERGIC). The ERGIC serves as the membrane source for WIPI2 recruitment and LC3 lipidation, leading to formation of autophagosomes that target cytosolic DNA or DNA viruses for degradation by the lysosome. Promotes autophagy by acting as a proton channel that directs proton efflux from the Golgi to facilitate MAP1LC3B/LC3B lipidation. The autophagy- and interferon-inducing activities can be uncoupled and autophagy induction is independent of TBK1 phosphorylation. Autophagy is also triggered upon infection by bacteria: following c-di-GMP-binding, which is produced by live Gram-positive bacteria, promotes reticulophagy. May be involved in translocon function, the translocon possibly being able to influence the induction of type I interferons. May be involved in transduction of apoptotic signals via its association with the major histocompatibility complex class II (MHC-II). In terms of biological role, (Microbial infection) Antiviral activity is antagonized by oncoproteins, such as papillomavirus (HPV) protein E7 and adenovirus early E1A protein. Such oncoproteins prevent the ability to sense cytosolic DNA. This is Stimulator of interferon genes protein from Homo sapiens (Human).